The chain runs to 533 residues: Putative phosphate permease HP_1491 (533 aa).

A run of 12 helical transmembrane segments spans residues 23 to 43 (IALALLFLIGAALLALIFGQA), 47 to 67 (GLLLIFAAVIGGYMAMNIGAN), 81 to 101 (AISMGGAILIAAICEMLGAII), 129 to 149 (VMLASLLSGALWLHVATLIGA), 156 to 176 (SVVGGIMGAGMAAAGMVAVNW), 182 to 202 (IVASWVISPLMGALIAMFFLM), 221 to 241 (VVPYLVALMSLTFSWYLIVKV), 248 to 268 (LNFEIQLACGCILALLIFILF), 286 to 306 (INELFNVPLIFAAALLSFAHG), 338 to 358 (VPLWIMVVGAAGIALGLSLYG), 372 to 392 (LDKMQAFCIALSAVITVLLAS), and 509 to 529 (LVTVPVSALLGALLFVALGFI).

It belongs to the inorganic phosphate transporter (PiT) (TC 2.A.20) family.

It localises to the cell membrane. Functionally, potential transporter for phosphate. This Helicobacter pylori (strain ATCC 700392 / 26695) (Campylobacter pylori) protein is Putative phosphate permease HP_1491.